We begin with the raw amino-acid sequence, 193 residues long: ATP-dependent Clp protease proteolytic subunit (193 aa).

Ser98 (nucleophile) is an active-site residue. His123 is a catalytic residue.

It belongs to the peptidase S14 family. Fourteen ClpP subunits assemble into 2 heptameric rings which stack back to back to give a disk-like structure with a central cavity, resembling the structure of eukaryotic proteasomes.

The protein resides in the cytoplasm. The catalysed reaction is Hydrolysis of proteins to small peptides in the presence of ATP and magnesium. alpha-casein is the usual test substrate. In the absence of ATP, only oligopeptides shorter than five residues are hydrolyzed (such as succinyl-Leu-Tyr-|-NHMec, and Leu-Tyr-Leu-|-Tyr-Trp, in which cleavage of the -Tyr-|-Leu- and -Tyr-|-Trp bonds also occurs).. In terms of biological role, cleaves peptides in various proteins in a process that requires ATP hydrolysis. Has a chymotrypsin-like activity. Plays a major role in the degradation of misfolded proteins. ClpXP is involved in the complete degradation of the Site-2 clipped anti-sigma-W factor RsiW. This results in the release of SigW and the transcription activation of the genes under the control of the sigma-W factor. In Oceanobacillus iheyensis (strain DSM 14371 / CIP 107618 / JCM 11309 / KCTC 3954 / HTE831), this protein is ATP-dependent Clp protease proteolytic subunit.